The sequence spans 212 residues: Ribosomal RNA small subunit methyltransferase G (212 aa).

S-adenosyl-L-methionine contacts are provided by residues glycine 80, leucine 85, 131 to 132 (AE), and arginine 146.

This sequence belongs to the methyltransferase superfamily. RNA methyltransferase RsmG family.

It localises to the cytoplasm. The catalysed reaction is guanosine(527) in 16S rRNA + S-adenosyl-L-methionine = N(7)-methylguanosine(527) in 16S rRNA + S-adenosyl-L-homocysteine. In terms of biological role, specifically methylates the N7 position of guanine in position 527 of 16S rRNA. This Xanthomonas oryzae pv. oryzae (strain MAFF 311018) protein is Ribosomal RNA small subunit methyltransferase G.